The chain runs to 218 residues: Pyridoxine/pyridoxamine 5'-phosphate oxidase (218 aa).

Substrate is bound by residues 14-17 and K72; that span reads RREY. Residues 67 to 72, 82 to 83, R88, K89, and Q111 each bind FMN; these read RIVLLK and YT. Y129, R133, and S137 together coordinate substrate. FMN is bound by residues 146-147 and W191; that span reads QS. 197–199 is a substrate binding site; sequence RLH. FMN is bound at residue R201.

It belongs to the pyridoxamine 5'-phosphate oxidase family. As to quaternary structure, homodimer. Requires FMN as cofactor.

The catalysed reaction is pyridoxamine 5'-phosphate + O2 + H2O = pyridoxal 5'-phosphate + H2O2 + NH4(+). It catalyses the reaction pyridoxine 5'-phosphate + O2 = pyridoxal 5'-phosphate + H2O2. Its pathway is cofactor metabolism; pyridoxal 5'-phosphate salvage; pyridoxal 5'-phosphate from pyridoxamine 5'-phosphate: step 1/1. It participates in cofactor metabolism; pyridoxal 5'-phosphate salvage; pyridoxal 5'-phosphate from pyridoxine 5'-phosphate: step 1/1. Functionally, catalyzes the oxidation of either pyridoxine 5'-phosphate (PNP) or pyridoxamine 5'-phosphate (PMP) into pyridoxal 5'-phosphate (PLP). The polypeptide is Pyridoxine/pyridoxamine 5'-phosphate oxidase (Escherichia coli O157:H7).